We begin with the raw amino-acid sequence, 65 residues long: Sperm protamine P1 (65 aa).

The interval 1–65 is disordered; the sequence is MARYRHSRSR…RYSRRRRRRY (65 aa).

Belongs to the protamine P1 family. In terms of tissue distribution, testis.

It is found in the nucleus. The protein localises to the chromosome. Its function is as follows. Protamines substitute for histones in the chromatin of sperm during the haploid phase of spermatogenesis. They compact sperm DNA into a highly condensed, stable and inactive complex. In Lagorchestes hirsutus (Rufous hare-wallaby), this protein is Sperm protamine P1 (PRM1).